Reading from the N-terminus, the 1079-residue chain is Electrogenic sodium bicarbonate cotransporter 1 (1079 aa).

A required for interaction with AHCYL1 region spans residues 1–62; it reads MEDEAVLDRG…EKREKERISE (62 aa). At 1-466 the chain is on the cytoplasmic side; the sequence is MEDEAVLDRG…FASDFYDALN (466 aa). Tyr-30 is modified (phosphotyrosine). Positions 39–52 are enriched in basic residues; the sequence is YRRRRRHKRKTGHK. Positions 39 to 78 are disordered; sequence YRRRRRHKRKTGHKEKREKERISENYSDKSDVENADESSS. Residue Thr-49 is modified to Phosphothreonine; by PKA. A compositionally biased stretch (basic and acidic residues) spans 53–70; that stretch reads EKREKERISENYSDKSDV. Phosphoserine occurs at positions 61, 65, 68, 223, 232, 233, and 245. A disordered region spans residues 237 to 265; the sequence is MFTSPDNGSPAMTHRNLTSSSLNDISDKP. A phosphothreonine mark is found at Thr-249 and Thr-254. Residues 251–260 show a composition bias toward polar residues; the sequence is RNLTSSSLND. Ser-256, Ser-257, and Ser-262 each carry phosphoserine. A helical membrane pass occupies residues 467-491; it reads IQSLSAILFIYLATVTNAITFGGLL. The Extracellular portion of the chain corresponds to 492–501; that stretch reads GDATDNMQGV. Residues 502–520 form a helical membrane-spanning segment; it reads LESFLGTAVSGAIFCLFAG. Residue Gln-521 is a topological domain, cytoplasmic. A discontinuously helical membrane pass occupies residues 522–542; the sequence is PLTILSSTGPVLVFERLLFNF. Residues 543–550 are Extracellular-facing; the sequence is SKDHNFDY. The chain crosses the membrane as a helical span at residues 551–571; that stretch reads LEFRLWIGLWSAFLCLILVAT. Topologically, residues 572–585 are cytoplasmic; sequence DASFLVQYFTRFTE. The helical transmembrane segment at 586–609 threads the bilayer; that stretch reads EGFSSLISFIFIYDAFKKMIKLAD. Topologically, residues 610-692 are extracellular; that stretch reads YYPINSDFKV…GNNCNFVPDV (83 aa). Residues 693–710 form a helical membrane-spanning segment; sequence TLMSFILFLGTYTSSMAL. The Cytoplasmic portion of the chain corresponds to 711 to 725; it reads KKFKTSRYFPTTARK. The helical transmembrane segment at 726 to 745 threads the bilayer; that stretch reads LISDFAIILSILIFCVIDAL. Topologically, residues 746 to 779 are extracellular; the sequence is VGVDTPKLIVPSEFKPTSPNRGWFVPPFGGNPWW. The interaction with CA4 stretch occupies residues 748 to 779; it reads VDTPKLIVPSEFKPTSPNRGWFVPPFGGNPWW. The helical transmembrane segment at 780–807 threads the bilayer; it reads VYLAAAIPALLVTILIFMDQQITAVIVN. At 808–819 the chain is on the cytoplasmic side; that stretch reads RKEHKLKKGAGY. A helical membrane pass occupies residues 820–836; it reads HLDLFWVAILMVVCSFM. Residue Ala-837 is a topological domain, extracellular. A discontinuously helical membrane pass occupies residues 838–855; the sequence is LPWYVAATVISIAHIDSL. The Cytoplasmic segment spans residues 856–877; that stretch reads KMETETSAPGEQPKFLGVREQR. The chain crosses the membrane as a helical span at residues 878-894; that stretch reads VTGTLVFILTGLSVFMA. Residues 895–901 are Extracellular-facing; that stretch reads PILKFIP. The helical transmembrane segment at 902 to 918 threads the bilayer; it reads MPVLYGVFLYMGVASLN. The Cytoplasmic portion of the chain corresponds to 919-960; sequence GVQFMDRLKLLLMPLKHQPDFIYLRHVPLRRVHLFTFLQVLC. Residues 961–986 constitute an intramembrane region (discontinuously helical); that stretch reads LALLWILKSTVAAIIFPVMILALVAV. Residues 987-1079 lie on the Cytoplasmic side of the membrane; that stretch reads RKGMDYLFSQ…STFLERHTSC (93 aa). Residues 1002-1004 are CA2-binding; sequence LDD. Positions 1012-1079 are disordered; sequence KKKEDEKKKK…STFLERHTSC (68 aa). A Phosphoserine; by PKA modification is found at Ser-1026. Position 1029 is a phosphoserine (Ser-1029). Residues 1030–1033 form a CA2-binding region; sequence DNDD. Phosphoserine is present on residues Ser-1034 and Ser-1044. Residues 1057–1059 form a required for basolateral targeting region; that stretch reads FLS. Over residues 1062-1079 the composition is skewed to basic and acidic residues; it reads KPSDREKSSTFLERHTSC. The residue at position 1069 (Ser-1069) is a Phosphoserine.

Belongs to the anion exchanger (TC 2.A.31) family. In terms of assembly, homodimer. Interacts with CA2/carbonic anhydrase 2 and CA4/carbonic anhydrase 4 which may regulate transporter activity. Isoform 1 but not isoform 2 interacts with AHCYL1 (via PEST domain when phosphorylated); the interaction increases SLC4A4 isoform 1 activity. Interacts with AHCYL2. Post-translationally, phosphorylation of Ser-1026 by PKA increases the binding of CA2 and changes the Na(+):HCO3(-) stoichiometry of the transporter from 3:1 to 2:1. Phosphorylated in presence of STK39 and dephosphorylated in presence of PP1 phosphatase; phosphorylation seems to inhibit SLC4A4 activity. In terms of processing, N-glycosylated. May not be necessary for the transporter basic functions. As to expression, expressed in colonic mucosa, kidney cortex and to gastric mucosa.

The protein localises to the basolateral cell membrane. It is found in the cell membrane. It catalyses the reaction 2 hydrogencarbonate(out) + Na(+)(out) = 2 hydrogencarbonate(in) + Na(+)(in). It carries out the reaction 3 hydrogencarbonate(out) + Na(+)(out) = 3 hydrogencarbonate(in) + Na(+)(in). In terms of biological role, electrogenic sodium/bicarbonate cotransporter with a Na(+):HCO3(-) stoichiometry varying from 1:2 to 1:3. May regulate bicarbonate influx/efflux at the basolateral membrane of cells and regulate intracellular pH. The chain is Electrogenic sodium bicarbonate cotransporter 1 (SLC4A4) from Oryctolagus cuniculus (Rabbit).